The primary structure comprises 158 residues: Putative pre-16S rRNA nuclease (158 aa).

The interval 138-158 (ELKPAQQTASRSGAGAGDGGS) is disordered.

The protein belongs to the YqgF nuclease family.

It is found in the cytoplasm. Functionally, could be a nuclease involved in processing of the 5'-end of pre-16S rRNA. This chain is Putative pre-16S rRNA nuclease, found in Synechococcus sp. (strain CC9605).